The primary structure comprises 387 residues: MDSIQESDVLNAVKTKLPPCCLRIFRNKIILVGTYDLDKSTGYRSGSLDVFTMDLKLLCSNNTYGAILDLKLSPFDDTLICTAHSTGNIMLWRIRCTDKDDFQSNELDIHAIANLQLFEKDVLIASCHFSPLDCKKLLVTNTAGEAATIDIRTLSVQFTASAIAQAYSKLDKIDYEVQGATEKVIHVESGQFLKPHELECWTAEFGSLQPFQDVVFTGGDDSRIMAHDLRSKEFIWSNNRIHDAGVVSIKCSQPNFRNNKPTSIITGSYDDNIRSLDLRMMGESIFPGANVPTVNKLACDLGGGVWRFVESPIDQEQSHHNGSDRLLVCCMYNGAKVVTMNDNSDEYFQIQHYLKKGHDSMCYGGDWSNSLIATCSFYDNSLQTWIV.

WD repeat units lie at residues 62–102, 119–159, 195–237, 241–286, and 357–387; these read NTYG…KDDF, EKDV…VQFT, PHEL…FIWS, IHDA…ESIF, and GHDSMCYGGDWSNSLIATCSFYDNSLQTWIV.

Belongs to the DPH7 family. As to quaternary structure, interacts with CAN1 and RTT10.

The protein localises to the cytoplasm. It localises to the endosome. The enzyme catalyses diphthine methyl ester-[translation elongation factor 2] + H2O = diphthine-[translation elongation factor 2] + methanol + H(+). It functions in the pathway protein modification; peptidyl-diphthamide biosynthesis. Functionally, catalyzes the demethylation of diphthine methyl ester to form diphthine, an intermediate in diphthamide biosynthesis, a post-translational modification of histidine which occurs in translation elongation factor 2 (EFT1 and EFT2). Also plays a role in the regulation of the retromer complex and is required for the recycling from endosomes of plasma membrane proteins like CAN1 and MUP1. Identified in a screen for mutants with decreased levels of rDNA transcription. The chain is Diphthine methyltransferase (RRT2) from Saccharomyces cerevisiae (strain ATCC 204508 / S288c) (Baker's yeast).